The chain runs to 1187 residues: Nicotinate dehydrogenase subunit B (1187 aa).

A helical membrane pass occupies residues 764–784; that stretch reads WWFGSLAGVFGAALGMLATAL. Cytochrome c domains lie at 804–907, 949–1057, and 1075–1163; these read AMLE…MSQT, AQWN…SSLE, and VSLS…RHRF. Heme c is bound by residues cysteine 818, cysteine 821, histidine 822, cysteine 964, cysteine 967, histidine 968, cysteine 1088, cysteine 1091, and histidine 1092.

It depends on Mo-molybdopterin cytosine dinucleotide as a cofactor.

It is found in the membrane. It carries out the reaction 2 Fe(III)-[cytochrome] + nicotinate + H2O = 2 Fe(II)-[cytochrome] + 6-hydroxynicotinate + 2 H(+). It participates in cofactor degradation; nicotinate degradation. Subunit of the two-component enzyme NicAB that mediates nicotinate hydroxylation, the first step in the aerobic nicotinate degradation pathway. Mediates conversion of nicotinate into 6-hydroxynicotinate (6HNA). This Pseudomonas putida (strain ATCC 47054 / DSM 6125 / CFBP 8728 / NCIMB 11950 / KT2440) protein is Nicotinate dehydrogenase subunit B (nicB).